The chain runs to 643 residues: Threonine--tRNA ligase (643 aa).

The region spanning M1–T61 is the TGS domain. The catalytic stretch occupies residues D243–P534. The Zn(2+) site is built by C334, H385, and H511.

Belongs to the class-II aminoacyl-tRNA synthetase family. Homodimer. The cofactor is Zn(2+).

The protein localises to the cytoplasm. The enzyme catalyses tRNA(Thr) + L-threonine + ATP = L-threonyl-tRNA(Thr) + AMP + diphosphate + H(+). Catalyzes the attachment of threonine to tRNA(Thr) in a two-step reaction: L-threonine is first activated by ATP to form Thr-AMP and then transferred to the acceptor end of tRNA(Thr). Also edits incorrectly charged L-seryl-tRNA(Thr). The polypeptide is Threonine--tRNA ligase (Actinobacillus pleuropneumoniae serotype 5b (strain L20)).